Here is a 598-residue protein sequence, read N- to C-terminus: mRNA-capping enzyme (598 aa).

A TPase region spans residues 1–215 (MSQTGAPPRW…GSASAPASEP (215 aa)). The region spanning 25 to 183 (LPMKTMLGPR…FRRYGDVEDA (159 aa)) is the Tyrosine-protein phosphatase domain. The Phosphocysteine intermediate role is filled by cysteine 126. Residues 186-227 (APPLPEWCFDEDEEEDGEEDGSASAPASEPSSSHTGQSKKKK) form a disordered region. Residues 193-206 (CFDEDEEEDGEEDG) show a composition bias toward acidic residues. A compositionally biased stretch (low complexity) spans 207-218 (SASAPASEPSSS). The interval 233 to 598 (GAVFLEGVSV…PKRSANSIPQ (366 aa)) is GTase. Lysine 298 (N6-GMP-lysine intermediate) is an active-site residue. Residues arginine 303, arginine 319, 347 to 349 (DGE), 462 to 464 (KWK), and 532 to 537 (RQRVDK) each bind GTP. Positions 575 to 598 (RKNPADSDLMPPPPPKRSANSIPQ) are disordered.

It in the N-terminal section; belongs to the non-receptor class of the protein-tyrosine phosphatase family. The protein in the C-terminal section; belongs to the eukaryotic GTase family.

The protein localises to the nucleus. It catalyses the reaction a 5'-end triphospho-ribonucleoside in mRNA + H2O = a 5'-end diphospho-ribonucleoside in mRNA + phosphate + H(+). The catalysed reaction is a 5'-end diphospho-ribonucleoside in mRNA + GTP + H(+) = a 5'-end (5'-triphosphoguanosine)-ribonucleoside in mRNA + diphosphate. Its function is as follows. Bifunctional mRNA-capping enzyme exhibiting RNA 5'-triphosphate monophosphatase activity in the N-terminal part and mRNA guanylyltransferase activity in the C-terminal part. Catalyzes the first two steps of cap formation: by removing the gamma-phosphate from the 5'-triphosphate end of nascent mRNA to yield a diphosphate end, and by transferring the GMP moiety of GTP to the 5'-diphosphate terminus of RNA via a covalent enzyme-GMP reaction intermediate. This chain is mRNA-capping enzyme (rngtt), found in Danio rerio (Zebrafish).